The following is a 77-amino-acid chain: Mu-conotoxin BuIIIA (77 aa).

The first 22 residues, 1 to 22 (MMSKLGVLLTICLLLFPLFALP), serve as a signal peptide directing secretion. Residues 23-51 (QDGDQPADRPAERMQDDISSEQNSLLEKR) constitute a propeptide that is removed on maturation. The disordered stretch occupies residues 26-46 (DQPADRPAERMQDDISSEQNS). Residues 28–38 (PADRPAERMQD) show a composition bias toward basic and acidic residues. Intrachain disulfides connect Cys-56/Cys-67, Cys-57/Cys-73, and Cys-63/Cys-74. Cys-74 carries the cysteine amide modification.

Belongs to the conotoxin M superfamily. Expressed by the venom duct.

It is found in the secreted. Its function is as follows. Mu-conotoxins block voltage-gated sodium channels (Nav). This synthetic toxin potently blocks rNav1.2/SCN2A, and rNav1.4/SCN4A. It also moderately blocks rNav1.1/SCN1A, rNav1.3/SCN3A, rNav1.5/SCN5A, and mNav1.6/SCN8A. The inhibition is reversible. This Conus bullatus (Bubble cone) protein is Mu-conotoxin BuIIIA.